Here is a 321-residue protein sequence, read N- to C-terminus: Glucokinase (321 aa).

8 to 13 (GDVGGT) lines the ATP pocket.

This sequence belongs to the bacterial glucokinase family.

It localises to the cytoplasm. The enzyme catalyses D-glucose + ATP = D-glucose 6-phosphate + ADP + H(+). The chain is Glucokinase from Cronobacter sakazakii (strain ATCC BAA-894) (Enterobacter sakazakii).